The following is a 46-amino-acid chain: Gene 1.1 protein (46 aa).

Residues 1–14 (MRTNFEKFTKRDSV) show a composition bias toward basic and acidic residues. Residues 1–46 (MRTNFEKFTKRDSVVNEQGEQWQERRDRMKKRHKQQRGNSQKREWN) are disordered.

Its function is as follows. The function of this early gene protein is unknown. This chain is Gene 1.1 protein (1.1), found in Escherichia coli (Bacteriophage T3).